A 511-amino-acid polypeptide reads, in one-letter code: Cytochrome P450 monooxygenase cypX (511 aa).

Residues 18-38 (LPFSLALVAAAFVLYNIVSII) form a helical membrane-spanning segment. N-linked (GlcNAc...) asparagine glycans are attached at residues Asn-162 and Asn-407. Heme is bound at residue Cys-454.

This sequence belongs to the cytochrome P450 family. Heme is required as a cofactor.

The protein resides in the membrane. It functions in the pathway mycotoxin biosynthesis. Cytochrome P450 monooxygenase; part of the fragmented gene cluster that mediates the biosynthesis of dothistromin (DOTH), a polyketide toxin very similar in structure to the aflatoxin precursor, versicolorin B. The first step of the pathway is the conversion of acetate to norsolorinic acid (NOR) and requires the fatty acid synthase subunits hexA and hexB, as well as the polyketide synthase pksA. PksA combines a hexanoyl starter unit and 7 malonyl-CoA extender units to synthesize the precursor NOR. The hexanoyl starter unit is provided to the acyl-carrier protein (ACP) domain by the fungal fatty acid synthase hexA/hexB. The second step is the conversion of NOR to averantin (AVN) and requires the norsolorinic acid ketoreductase nor1, which catalyzes the dehydration of norsolorinic acid to form (1'S)-averantin. The cytochrome P450 monooxygenase avnA then catalyzes the hydroxylation of AVN to 5'hydroxyaverantin (HAVN). The next step is performed by adhA that transforms HAVN to averufin (AVF). Averufin might then be converted to hydroxyversicolorone by cypX and avfA. Hydroxyversicolorone is further converted versiconal hemiacetal acetate (VHA) by moxY. VHA is then the substrate for the versiconal hemiacetal acetate esterase est1 to yield versiconal (VAL). Versicolorin B synthase vbsA then converts VAL to versicolorin B (VERB) by closing the bisfuran ring. Then, the activity of the versicolorin B desaturase verB leads to versicolorin A (VERA). DotB, a predicted chloroperoxidase, may perform epoxidation of the A-ring of VERA. Alternatively, a cytochrome P450, such as cypX or avnA could catalyze this step. It is also possible that another, uncharacterized, cytochrome P450 enzyme is responsible for this step. Opening of the epoxide could potentially be achieved by the epoxide hydrolase epoA. However, epoA seems not to be required for DOTH biosynthesis, but other epoxide hydrolases may have the ability to complement this hydrolysis. Alternatively, opening of the epoxide ring could be achieved non-enzymatically. The next step is the deoxygenation of ring A to yield the 5,8-dihydroxyanthraquinone which is most likely catalyzed by the NADPH dehydrogenase encoded by ver1. The last stages of DOTH biosynthesis are proposed to involve hydroxylation of the bisfuran. OrdB and norB might have oxidative roles here. An alternative possibility is that cytochrome P450 monoogenases such as avnA and cypX might perform these steps in addition to previously proposed steps. The polypeptide is Cytochrome P450 monooxygenase cypX (Dothistroma septosporum (Red band needle blight fungus)).